Here is a 208-residue protein sequence, read N- to C-terminus: Probable GTP-binding protein EngB (208 aa).

In terms of domain architecture, EngB-type G spans 23 to 205 (LTSEMVILGR…RQTLLKYLLT (183 aa)). Residues 31 to 38 (GRSNVGKS), 57 to 61 (GKTRL), 84 to 87 (DLPG), 154 to 157 (TKFD), and 182 to 184 (FNA) each bind GTP. Mg(2+)-binding residues include Ser-38 and Thr-59.

It belongs to the TRAFAC class TrmE-Era-EngA-EngB-Septin-like GTPase superfamily. EngB GTPase family. It depends on Mg(2+) as a cofactor.

Its function is as follows. Necessary for normal cell division and for the maintenance of normal septation. This is Probable GTP-binding protein EngB from Helicobacter pylori (strain P12).